The sequence spans 559 residues: Complement component receptor 1-like protein (559 aa).

A signal peptide spans 1–35 (MEASSPLDPVGRLVAFCRGGVHLAVLLLFLSPSTL). Sushi domains follow at residues 36–96 (GQCP…VCIR), 97–158 (KQCE…ICES), 159–229 (IPCE…QCIE), 231–290 (NKCT…SCFK), 292–354 (KSCG…VCEQ), 355–415 (VICK…KCVS), and 417–477 (VICK…KCVS). The Extracellular segment spans residues 36–482 (GQCPAPPLFP…PKCVSRSNSG (447 aa)). 14 disulfides stabilise this stretch: C38/C81, C68/C94, C99/C140, C126/C156, C161/C210, C190/C227, C233/C275, C261/C288, C294/C336, C322/C352, C357/C400, C386/C413, C419/C462, and C448/C475. T53 carries an O-linked (GalNAc...) threonine glycan. A glycan (N-linked (GlcNAc...) asparagine) is linked at N331. A helical membrane pass occupies residues 483–503 (LIAGIFIGIIVLILFIIFSYW). Topologically, residues 504-559 (MIMKFKKRNSTNEKCKEVGIYLNSKEDSCVQPQSLLTSQENNSTSSPARNSLTQEV) are cytoplasmic. Phosphoserine occurs at positions 527, 531, and 537. The interval 535–559 (PQSLLTSQENNSTSSPARNSLTQEV) is disordered. A Phosphothreonine modification is found at T540. S554 carries the post-translational modification Phosphoserine.

This sequence belongs to the receptors of complement activation (RCA) family. As to quaternary structure, interacts with C3b.

It is found in the membrane. Functionally, acts as a cofactor for complement factor I, a serine protease which protects autologous cells against complement-mediated injury by cleaving C3b and C4b deposited on host tissue. Also acts as a decay-accelerating factor, preventing the formation of C4b2a and C3bBb, the amplification convertases of the complement cascade. Seems to act as a costimulatory factor for T-cells. May play a crucial role in early embryonic development by maintaining fetomaternal tolerance. The polypeptide is Complement component receptor 1-like protein (Cr1l) (Rattus norvegicus (Rat)).